A 316-amino-acid polypeptide reads, in one-letter code: Adenine deaminase (316 aa).

Zn(2+) contacts are provided by H14, H16, and H194. E197 (proton donor) is an active-site residue. D275 provides a ligand contact to Zn(2+). Residue D276 participates in substrate binding.

It belongs to the metallo-dependent hydrolases superfamily. Adenosine and AMP deaminases family. Adenine deaminase type 2 subfamily. Requires Zn(2+) as cofactor.

The enzyme catalyses adenine + H2O + H(+) = hypoxanthine + NH4(+). Catalyzes the hydrolytic deamination of adenine to hypoxanthine. Plays an important role in the purine salvage pathway and in nitrogen catabolism. The protein is Adenine deaminase of Pseudomonas aeruginosa (strain LESB58).